The following is a 569-amino-acid chain: ATP-dependent RNA helicase HAS1 (569 aa).

Disordered stretches follow at residues 1-57 (MSKG…DQNF) and 71-110 (FKEE…FEDL). Residues 34–45 (EEEISSDEEEAD) are compositionally biased toward acidic residues. The span at 71–85 (FKEEKKQKKNKEPKT) shows a compositional bias: basic and acidic residues. The short motif at 105–133 (DKFEDLGLSEPTMRAIKDMGFEKMTKVQE) is the Q motif element. The region spanning 136–312 (IPPLLAGRDV…RISLRAGPLY (177 aa)) is the Helicase ATP-binding domain. 149-156 (AKTGSGKT) is an ATP binding site. Positions 259–262 (DEAD) match the DEAD box motif. The Helicase C-terminal domain occupies 326 to 496 (GLEQGYVTCD…NIQSQLTKLI (171 aa)).

Belongs to the DEAD box helicase family. DDX18/HAS1 subfamily. In terms of assembly, associates in the nucleolus with the 60S and pre-60S ribosomal subunits.

Its subcellular location is the nucleus. The protein resides in the nucleolus. The catalysed reaction is ATP + H2O = ADP + phosphate + H(+). Functionally, ATP-dependent RNA helicase involved in 40S ribosomal subunit biogenesis. Required for the processing and cleavage of 35S pre-rRNA at sites A0, A1, and A2, leading to mature 18S rRNA. This is ATP-dependent RNA helicase HAS1 (HAS1) from Meyerozyma guilliermondii (strain ATCC 6260 / CBS 566 / DSM 6381 / JCM 1539 / NBRC 10279 / NRRL Y-324) (Yeast).